The sequence spans 88 residues: Large ribosomal subunit protein bL27 (88 aa).

A disordered region spans residues 1–24; sequence MAHKKAGGSSRNGRDSEGRRLGVK.

It belongs to the bacterial ribosomal protein bL27 family.

This chain is Large ribosomal subunit protein bL27, found in Methylobacterium radiotolerans (strain ATCC 27329 / DSM 1819 / JCM 2831 / NBRC 15690 / NCIMB 10815 / 0-1).